The chain runs to 361 residues: Phosphate acyltransferase (361 aa).

It belongs to the PlsX family. Homodimer. Probably interacts with PlsY.

Its subcellular location is the cytoplasm. The enzyme catalyses a fatty acyl-[ACP] + phosphate = an acyl phosphate + holo-[ACP]. It participates in lipid metabolism; phospholipid metabolism. Catalyzes the reversible formation of acyl-phosphate (acyl-PO(4)) from acyl-[acyl-carrier-protein] (acyl-ACP). This enzyme utilizes acyl-ACP as fatty acyl donor, but not acyl-CoA. The chain is Phosphate acyltransferase from Anaeromyxobacter dehalogenans (strain 2CP-C).